The following is a 548-amino-acid chain: MLERRCRGPTAMGPAHPWLFSGPSQESSQPNRGLRYQGKSVAQPGGPAPVKVHRCAHCRKRFPGWVALWLHTRRCQARLPLPCHECNQRFRHAPFLALHLQVHASAVPDLGFICHLCGHSFRGWVALVLHLRAHSASKRPITCPECNKRFWRQKQLRAHLRRCQPPAPEARPFICGNCGRSFAQWDQLVVHKRVHVAEALEEAAAKALGPRPRGRPSVTAPRPGGDAVDRPFQCACCGKRFRHKPNLIAHRRVHTGERPHQCPECGKRFTNKPYLTSHRRIHTGEKPYPCTECGRRFRHKPNLLSHSKIHKRSEVSAQAASHTGSHLIAAEPMAQPALGVPLGSLRTPAEAPASLHSCTDCGRSFRLERFLRLHQRQHTGERPFTCTECGKNFGKKTHLVAHSRVHSGERPFACEECGRRFSQGSHLAAHRRDHAPERPFVCPDCGKAFRHKPYLAAHRRIHTGEKPYVCPDCGKAFSQKSNLVSHRRIHTGERPYACPDCDRSFSQKSNLITHRKSHIRDGAFCCAICGQTFDDEDRLLMHQKKHDA.

Residues 1–47 are disordered; the sequence is MLERRCRGPTAMGPAHPWLFSGPSQESSQPNRGLRYQGKSVAQPGGP. Positions 22–31 are enriched in polar residues; that stretch reads GPSQESSQPN. At Ser27 the chain carries Phosphoserine. Position 39 is an N6-acetyllysine (Lys39). Residues 53-75 form a C2H2-type 1; atypical zinc finger; the sequence is HRCAHCRKRFPGWVALWLHTRRC. C2H2-type zinc fingers lie at residues 81–103 and 112–134; these read LPCH…LQVH and FICH…LRAH. A C2H2-type 4; atypical zinc finger spans residues 141 to 163; the sequence is ITCPECNKRFWRQKQLRAHLRRC. C2H2-type zinc fingers lie at residues 173 to 195, 232 to 254, 260 to 282, 288 to 310, 356 to 378, 384 to 406, 412 to 434, 440 to 462, 468 to 490, 496 to 518, and 524 to 546; these read FICG…KRVH, FQCA…RRVH, HQCP…RRIH, YPCT…SKIH, HSCT…QRQH, FTCT…SRVH, FACE…RRDH, FVCP…RRIH, YVCP…RRIH, YACP…RKSH, and FCCA…QKKH. Position 272 is an N6-acetyllysine (Lys272).

In terms of assembly, homodimers and homomultimers. Found in a complex with RIP60 and RIP100. As to expression, expressed in the liver and in subcutaneous and visceral adipose tissue.

It is found in the nucleus. The protein resides in the cytoplasm. Its subcellular location is the cytosol. In terms of biological role, sequence-specific double-stranded DNA-binding protein. Binds ATT-rich and T-rich DNA sequences and facilitates DNA bending. May regulate the expression of genes involved in cellular fatty acid import, including SCARB1/CD36, and genes involved in lipid droplet formation. May regulate the expression of LCN2, and thereby influence iron metabolism and apoptosis-related pathways. May regulate the expression of genes involved in glucose transport. This Rattus norvegicus (Rat) protein is DNA-binding protein REPIN1 (Repin1).